The chain runs to 499 residues: Lysosomal Pro-X carboxypeptidase (499 aa).

Positions 1-21 are cleaved as a signal peptide; that stretch reads MGRCSLLLLLLLIAFLTPGAA. Positions 22-47 are excised as a propeptide; sequence NPVSPSLRAPSSLPWSTSFRSRPTIT. A glycan (N-linked (GlcNAc...) asparagine) is linked at Asn103. Catalysis depends on Ser181, which acts as the Charge relay system. The SKS domain stretch occupies residues 196 to 337; it reads HLVVGALASS…QNIFQALNVY (142 aa). Disulfide bonds link Cys217–Cys375, Cys235–Cys313, Cys266–Cys346, and Cys367–Cys397. Asn234 is a glycosylation site (N-linked (GlcNAc...) asparagine). Residues Asn339 and Asn348 are each glycosylated (N-linked (GlcNAc...) asparagine). Asn418 carries N-linked (GlcNAc...) asparagine glycosylation. Active-site charge relay system residues include Asp433 and His458.

The protein belongs to the peptidase S28 family. As to quaternary structure, homodimer.

It localises to the lysosome. The catalysed reaction is Cleavage of a -Pro-|-Xaa bond to release a C-terminal amino acid.. In terms of biological role, cleaves C-terminal amino acids linked to proline in peptides such as angiotensin II, III and des-Arg9-bradykinin. This cleavage occurs at acidic pH, but enzymatic activity is retained with some substrates at neutral pH. The sequence is that of Lysosomal Pro-X carboxypeptidase (PRCP) from Bos taurus (Bovine).